A 168-amino-acid chain; its full sequence is Transcription antitermination protein NusB (168 aa).

Belongs to the NusB family.

Functionally, involved in transcription antitermination. Required for transcription of ribosomal RNA (rRNA) genes. Binds specifically to the boxA antiterminator sequence of the ribosomal RNA (rrn) operons. The protein is Transcription antitermination protein NusB of Deinococcus deserti (strain DSM 17065 / CIP 109153 / LMG 22923 / VCD115).